Here is a 139-residue protein sequence, read N- to C-terminus: D-ribose pyranase (139 aa).

The active-site Proton donor is H20. Substrate contacts are provided by residues D28, H106, and 128 to 130 (YAN).

The protein belongs to the RbsD / FucU family. RbsD subfamily. In terms of assembly, homodecamer.

The protein resides in the cytoplasm. It catalyses the reaction beta-D-ribopyranose = beta-D-ribofuranose. The protein operates within carbohydrate metabolism; D-ribose degradation; D-ribose 5-phosphate from beta-D-ribopyranose: step 1/2. Catalyzes the interconversion of beta-pyran and beta-furan forms of D-ribose. The polypeptide is D-ribose pyranase (Salmonella choleraesuis (strain SC-B67)).